The chain runs to 91 residues: Envelope glycoprotein N (91 aa).

The first 23 residues, 1–23 (MGPPRRVCRAGLLFVLLVALAAG), serve as a signal peptide directing secretion. A disordered region spans residues 23-48 (GDAGPRGEPPGEEGGRDGIGGARCET). At 24 to 55 (DAGPRGEPPGEEGGRDGIGGARCETQNTGQMS) the chain is on the virion surface side. Residues 56–76 (APGALVPFYVGMASMGVCIIA) form a helical membrane-spanning segment. Topologically, residues 77–91 (HVCQICQRLLAAGHA) are intravirion.

This sequence belongs to the herpesviridae glycoprotein N family. As to quaternary structure, interacts (via N-terminus) with gM (via N-terminus). The gM-gN heterodimer forms the gCII complex.

The protein localises to the virion membrane. It localises to the host membrane. Its subcellular location is the host Golgi apparatus. The protein resides in the host trans-Golgi network. Envelope glycoprotein necessary for proper maturation of gM and modulation of its membrane fusion activity. Also plays a critical role in virion morphogenesis. This is Envelope glycoprotein N from Homo sapiens (Human).